Reading from the N-terminus, the 372-residue chain is Oxidoreductase ptaL (372 aa).

Residues 1–16 (MKHIVIIGGGFAGVST) form the signal peptide. 6-hydroxy-FAD contacts are provided by residues 8-12 (GGGFA) and arginine 51. Asparagine 251 is a glycosylation site (N-linked (GlcNAc...) asparagine). Residue aspartate 285 coordinates 6-hydroxy-FAD.

The protein belongs to the FAD-dependent oxidoreductase family. The cofactor is 6-hydroxy-FAD.

It functions in the pathway secondary metabolite biosynthesis. Its function is as follows. Oxidoreductase; part of the gene cluster that mediates the biosynthesis of pestheic acid, a diphenyl ether which is a biosynthetic precursor of the unique chloropupukeananes. The biosynthesis initiates from condensation of acetate and malonate units catalyzed by the non-reducing PKS ptaA. As the ptaA protein is TE/CLC domain-deficient, hydrolysis and Claisen cyclization of the polyketide could be catalyzed by ptaB containing a beta-lactamase domain. The ptaB protein might hydrolyze the thioester bond between the ACP of ptaA and the intermediate to release atrochrysone carboxylic acid, which is spontaneously dehydrated to form endocrocin anthrone. Endocrocin anthrone is then converted to endocrocin, catalyzed by the anthrone oxygenase ptaC. Spontaneous decarboxylation of endocrocin occurs to generate emodin. An O-methyltransferase (ptaH or ptaI) could methylate emodin to form physcion. PtaJ could then catalyze the oxidative cleavage of physcion, and rotation of the intermediate could then afford desmethylisosulochrin. PtaF, a putative NADH-dependent oxidoreductase, might also participate in the oxidative cleavage step. Desmethylisosulochrin is then transformed by another O-methyltransferase (ptaH or ptaI) to form isosulochrin. Chlorination of isosulochrin by ptaM in the cyclohexadienone B ring then produces chloroisosulochrin. PtaE is responsible for the oxidative coupling reactions of both benzophenones isosulochrin and chloroisosulochrin to RES-1214-1 and pestheic acid respectively, regardless of chlorination. This is Oxidoreductase ptaL from Pestalotiopsis fici (strain W106-1 / CGMCC3.15140).